We begin with the raw amino-acid sequence, 440 residues long: MKMAGWKKKLCPGHHLWALGCYMLLAVVSLRLSLRFKCDVDSLDLESRDFQSQHCRDMLYNSLKLPAKRSINCSGITRGDQEAVVQALLDNLEVKKKRPPLTDTYYLNITRDCERFKAQRKFIQFPLSKEELDFPIAYSMVVHEKIENFERLLRAVYAPQNIYCVHVDVKSPETFKEAVKAIISCFPNVFMASKLVPVVYASWSRVQADLNCMEDLLQSSVSWKYLLNTCGTDFPIKTNAEMVLALKMLKGKNSMESEVPSESKKNRWKYRYEVTDTLYPTSKIKDPPPDNLPMFTGNAYFVASRAFVQHVLDNPKSQILVEWVKDTYSPDEHLWATLQRAPWMPGSVPSHPKYHISDMTAIARLVKWQYHEGDVSMGAPYAPCSGIHRRAICIYGAGDLYWILQNHHLLANKFDPRVDDNVLQCLEEYLRHKAIYGTEL.

The Cytoplasmic segment spans residues 1–9 (MKMAGWKKK). The helical; Signal-anchor for type II membrane protein transmembrane segment at 10-30 (LCPGHHLWALGCYMLLAVVSL) threads the bilayer. The Lumenal segment spans residues 31–440 (RLSLRFKCDV…RHKAIYGTEL (410 aa)). Asn-72 and Asn-108 each carry an N-linked (GlcNAc...) asparagine; by host glycan. 4 cysteine pairs are disulfide-bonded: Cys-73–Cys-230, Cys-164–Cys-384, Cys-185–Cys-212, and Cys-393–Cys-425.

It belongs to the glycosyltransferase 14 family.

It localises to the host Golgi apparatus membrane. The enzyme catalyses a 3-O-[beta-D-galactosyl-(1-&gt;3)-N-acetyl-alpha-D-galactosaminyl]-L-seryl-[protein] + UDP-N-acetyl-alpha-D-glucosamine = 3-O-{beta-D-galactosyl-(1-&gt;3)-[N-acetyl-beta-D-glucosaminyl-(1-&gt;6)]-N-acetyl-alpha-D-galactosaminyl}-L-seryl-[protein] + UDP + H(+). It catalyses the reaction a 3-O-[beta-D-galactosyl-(1-&gt;3)-N-acetyl-alpha-D-galactosaminyl]-L-threonyl-[protein] + UDP-N-acetyl-alpha-D-glucosamine = a 3-O-{beta-D-galactosyl-(1-&gt;3)-[N-acetyl-beta-D-glucosaminyl-(1-&gt;6)]-N-acetyl-alpha-D-galactosaminyl}-L-threonyl-[protein] + UDP + H(+). The catalysed reaction is a beta-D-Gal-(1-&gt;4)-beta-D-GlcNAc-(1-&gt;3)-beta-D-Gal-(1-&gt;4)-beta-D-GlcNAc derivative + UDP-N-acetyl-alpha-D-glucosamine = a beta-D-Gal-(1-&gt;4)-beta-D-GlcNAc-(1-&gt;3)-[beta-D-GlcNAc-(1-&gt;6)]-beta-D-Gal-(1-&gt;4)-N-acetyl-beta-D-glucosaminyl derivative + UDP + H(+). It carries out the reaction 3-O-[N-acetyl-beta-D-glucosaminyl-(1-&gt;3)-N-acetyl-alpha-D-galactosaminyl]-L-seryl-[protein] + UDP-N-acetyl-alpha-D-glucosamine = 3-O-[N-acetyl-beta-D-glucosaminyl-(1-&gt;3)-[N-acetyl-beta-D-glucosaminyl-(1-&gt;6)]-N-acetyl-alpha-D-galactosaminyl]-L-seryl-[protein] + UDP + H(+). The enzyme catalyses a 3-O-[N-acetyl-beta-D-glucosaminyl-(1-&gt;3)-N-acetyl-alpha-D-galactosaminyl]-L-threonyl-[protein] + UDP-N-acetyl-alpha-D-glucosamine = 3-O-[N-acetyl-beta-D-glucosaminyl-(1-&gt;3)-[N-acetyl-beta-D-glucosaminyl-(1-&gt;6)]-N-acetyl-alpha-D-galactosaminyl]-L-threonyl-[protein] + UDP + H(+). It functions in the pathway protein modification; protein glycosylation. Non-essential glycosyltransferase that can synthesize all known mucin beta 6 N-acetylglucosaminides. Mediates core 2 and core 4 O-glycan branching, 2 important steps in mucin-type biosynthesis. Has also I-branching enzyme activity by converting linear into branched poly-N-acetyllactosaminoglycans. Contributes to the post-translational modifications of structural proteins. The sequence is that of Beta-1,3-galactosyl-O-glycosyl-glycoprotein beta-1,6-N-acetylglucosaminyltransferase (Bo17) from Bovine herpesvirus 4 (strain V. test) (BoHV-4).